The sequence spans 386 residues: Leupaxin (386 aa).

Met-1 carries the post-translational modification N-acetylmethionine. An LD motif 1 motif is present at residues Glu-3–Thr-15. Positions Glu-12–Asp-51 are disordered. The segment covering Leu-16–Ala-26 has biased composition (polar residues). Ser-19 carries the phosphoserine modification. Tyr-22 carries the phosphotyrosine modification. The segment covering Ser-33–Ser-44 has biased composition (basic and acidic residues). At Tyr-62 the chain carries Phosphotyrosine. 2 consecutive short sequence motifs (LD motif) follow at residues Asn-70–Pro-82 and Gln-92–Met-103. Position 72 is a phosphotyrosine; by LYN (Tyr-72). The residue at position 81 (Ser-81) is a Phosphoserine. 4 LIM zinc-binding domains span residues Gly-150–Pro-209, Arg-210–Ser-267, Pro-268–Thr-327, and Leu-328–Leu-386.

This sequence belongs to the paxillin family. As to quaternary structure, interacts with unphosphorylated ITGA4. Interacts with AR and SRF. Interacts with PTK2B/PYK2, PTPN22 and PTPN12. Interacts (via LD motif 3) with LYN and the interaction is induced upon B-cell antigen receptor (BCR) activation. Interacts (via LD motif 3) with PTK2/FAK. Post-translationally, phosphorylated on tyrosine residues. Phosphorylation on Tyr-72 is important for its inhibitory function. Bombesin stimulates phosphorylation on Tyr-22, Tyr-62 and Tyr-72.

It is found in the cytoplasm. The protein localises to the cell junction. It localises to the focal adhesion. The protein resides in the nucleus. Its subcellular location is the perinuclear region. It is found in the cell projection. The protein localises to the podosome. It localises to the cell membrane. Transcriptional coactivator for androgen receptor (AR) and serum response factor (SRF). Contributes to the regulation of cell adhesion, spreading and cell migration and acts as a negative regulator in integrin-mediated cell adhesion events. Suppresses the integrin-induced tyrosine phosphorylation of paxillin (PXN). May play a critical role as an adapter protein in the formation of the adhesion zone in osteoclasts. Negatively regulates B-cell antigen receptor (BCR) signaling. The protein is Leupaxin (LPXN) of Oryctolagus cuniculus (Rabbit).